Reading from the N-terminus, the 217-residue chain is Small ribosomal subunit protein uS3c (217 aa).

Residues 39–109 (IRSCIEKQLH…QIRINLIEIT (71 aa)) enclose the KH type-2 domain.

This sequence belongs to the universal ribosomal protein uS3 family. In terms of assembly, part of the 30S ribosomal subunit.

It localises to the plastid. Its subcellular location is the chloroplast. The chain is Small ribosomal subunit protein uS3c (rps3) from Gracilaria tenuistipitata var. liui (Red alga).